Consider the following 607-residue polypeptide: Serum albumin (607 aa).

Residues 1-16 (MKWTILTALLIISAES) form the signal peptide. The propeptide occupies 17–20 (KNLY). Albumin domains follow at residues 19 to 209 (LYKR…TQLK), 210 to 401 (KALH…HVLA), and 403 to 600 (AIKE…ILIE). Position 27 (His-27) interacts with Cu cation. Intrachain disulfides connect Cys-77–Cys-86, Cys-99–Cys-115, Cys-114–Cys-125, Cys-147–Cys-192, Cys-191–Cys-200, Cys-223–Cys-269, Cys-268–Cys-276, Cys-288–Cys-302, Cys-301–Cys-312, Cys-339–Cys-384, Cys-383–Cys-392, Cys-415–Cys-461, Cys-460–Cys-471, Cys-484–Cys-500, Cys-499–Cys-510, Cys-537–Cys-582, and Cys-581–Cys-590. Residues His-270 and Asp-272 each contribute to the Zn(2+) site. Residues Asp-272 and Glu-275 each contribute to the Ca(2+) site.

It belongs to the ALB/AFP/VDB family. As to expression, plasma. In the skin, widely distributed around the membranes of epithelial layer cells and within the stratum spongiosum of the dermis (at protein level).

The protein resides in the secreted. Serum albumin, the main protein of plasma, has a good binding capacity for water, Ca(2+), Na(+), K(+), fatty acids, hormones, bilirubin and drugs. Its main function is the regulation of the colloidal osmotic pressure of blood. Potent inhibitor of trypsin but has no inhibitory effect on thrombin, chymotrypsin, elastase and subtilisin. In Bombina maxima (Giant fire-bellied toad), this protein is Serum albumin.